The chain runs to 110 residues: uncharacterized protein (110 aa).

It belongs to the RuBisCO large chain family.

The protein localises to the mitochondrion. This is an uncharacterized protein from Arabidopsis thaliana (Mouse-ear cress).